The primary structure comprises 547 residues: Dihydroxy-acid dehydratase (547 aa).

Residue aspartate 78 participates in Mg(2+) binding. Cysteine 119 lines the [2Fe-2S] cluster pocket. The Mg(2+) site is built by aspartate 120 and lysine 121. The residue at position 121 (lysine 121) is an N6-carboxylysine. Cysteine 191 is a [2Fe-2S] cluster binding site. Glutamate 439 contributes to the Mg(2+) binding site. The active-site Proton acceptor is the serine 464.

It belongs to the IlvD/Edd family. As to quaternary structure, homodimer. [2Fe-2S] cluster is required as a cofactor. It depends on Mg(2+) as a cofactor.

The enzyme catalyses (2R)-2,3-dihydroxy-3-methylbutanoate = 3-methyl-2-oxobutanoate + H2O. The catalysed reaction is (2R,3R)-2,3-dihydroxy-3-methylpentanoate = (S)-3-methyl-2-oxopentanoate + H2O. It participates in amino-acid biosynthesis; L-isoleucine biosynthesis; L-isoleucine from 2-oxobutanoate: step 3/4. It functions in the pathway amino-acid biosynthesis; L-valine biosynthesis; L-valine from pyruvate: step 3/4. Functionally, functions in the biosynthesis of branched-chain amino acids. Catalyzes the dehydration of (2R,3R)-2,3-dihydroxy-3-methylpentanoate (2,3-dihydroxy-3-methylvalerate) into 2-oxo-3-methylpentanoate (2-oxo-3-methylvalerate) and of (2R)-2,3-dihydroxy-3-methylbutanoate (2,3-dihydroxyisovalerate) into 2-oxo-3-methylbutanoate (2-oxoisovalerate), the penultimate precursor to L-isoleucine and L-valine, respectively. This is Dihydroxy-acid dehydratase from Archaeoglobus fulgidus (strain ATCC 49558 / DSM 4304 / JCM 9628 / NBRC 100126 / VC-16).